The sequence spans 83 residues: Probable calcium-binding protein CML28 (83 aa).

2 EF-hand domains span residues 5-40 (TEKA…LGSV) and 43-75 (EDIK…NRGL). The Ca(2+) site is built by Asp18, Asn20, Asp22, Lys24, Glu29, Asp53, Asp55, Asp57, Tyr59, and Glu64.

Potential calcium sensor. The polypeptide is Probable calcium-binding protein CML28 (CML28) (Arabidopsis thaliana (Mouse-ear cress)).